Reading from the N-terminus, the 103-residue chain is Trp operon repressor homolog (103 aa).

The DNA-binding element occupies 62 to 85; that stretch reads QRKISELLGVGVATITRGSNELKH.

This sequence belongs to the TrpR family. In terms of assembly, homodimer.

It localises to the cytoplasm. Its function is as follows. This protein is an aporepressor. When complexed with L-tryptophan it binds the operator region of the trp operon and prevents the initiation of transcription. The sequence is that of Trp operon repressor homolog from Photobacterium profundum (strain SS9).